Consider the following 58-residue polypeptide: U11-myrmicitoxin-Tb1a (58 aa).

The propeptide occupies 1–24 (LAMAMGDAVADAQARAMAAAYAIA). Cys-34 and Cys-57 are disulfide-bonded.

This sequence belongs to the formicidae venom precursor-01 superfamily. In terms of tissue distribution, expressed by the venom gland.

It localises to the secreted. It is found in the target cell membrane. In terms of biological role, neurotoxin that causes irreversible rapid flaccid paralysis in blowflies and honeybees upon intrathoracic injection. Causes a quick and irreversible cytolytic effect (at 10 uM) indicating it possibly acts as a pore-forming peptide. Shows only weak effect on aphids (A.pisum) at high doses 24 hours post intrathoracic injection. In vitro, is not cytotoxic on the dipteran S2 Drosophila embryonic cell line. In Tetramorium bicarinatum (Tramp ant), this protein is U11-myrmicitoxin-Tb1a.